Consider the following 100-residue polypeptide: Sec-independent protein translocase protein TatA (100 aa).

The chain crosses the membrane as a helical span at residues 1 to 21; it reads MGALKPWHIAVLVVVLILLFG. Positions 44–55 are enriched in basic and acidic residues; it reads KSLHDDDRDLAE. The segment at 44–100 is disordered; sequence KSLHDDDRDLAEKANAQAGYQPLPPQVQQEPYPQQTPYQAPPQQQPVVDPVQRARDS. The span at 69–81 shows a compositional bias: low complexity; it reads QVQQEPYPQQTPY.

Belongs to the TatA/E family. As to quaternary structure, the Tat system comprises two distinct complexes: a TatABC complex, containing multiple copies of TatA, TatB and TatC subunits, and a separate TatA complex, containing only TatA subunits. Substrates initially bind to the TatABC complex, which probably triggers association of the separate TatA complex to form the active translocon.

The protein localises to the cell membrane. Functionally, part of the twin-arginine translocation (Tat) system that transports large folded proteins containing a characteristic twin-arginine motif in their signal peptide across membranes. TatA could form the protein-conducting channel of the Tat system. The polypeptide is Sec-independent protein translocase protein TatA (Salinispora arenicola (strain CNS-205)).